Here is a 558-residue protein sequence, read N- to C-terminus: Potassium-transporting ATPase potassium-binding subunit (558 aa).

12 helical membrane-spanning segments follow: residues 2–22, 66–86, 135–155, 177–197, 253–273, 280–300, 327–347, 354–374, 378–398, 413–433, 482–502, and 528–548; these read LQGF…APLL, VSAA…ILMF, ALGF…IAFI, ILLP…VPET, LLET…YGIM, GWLI…IAAV, FGWV…CGAV, LMPP…IWGG, GTAY…LMVG, IVLA…PTAI, LSAS…LIFL, and GITA…ILVL.

Belongs to the KdpA family. In terms of assembly, the system is composed of three essential subunits: KdpA, KdpB and KdpC.

Its subcellular location is the cell inner membrane. Functionally, part of the high-affinity ATP-driven potassium transport (or Kdp) system, which catalyzes the hydrolysis of ATP coupled with the electrogenic transport of potassium into the cytoplasm. This subunit binds the periplasmic potassium ions and delivers the ions to the membrane domain of KdpB through an intramembrane tunnel. The chain is Potassium-transporting ATPase potassium-binding subunit from Synechocystis sp. (strain ATCC 27184 / PCC 6803 / Kazusa).